Reading from the N-terminus, the 194-residue chain is Imidazoleglycerol-phosphate dehydratase (194 aa).

The protein belongs to the imidazoleglycerol-phosphate dehydratase family.

The protein localises to the cytoplasm. It catalyses the reaction D-erythro-1-(imidazol-4-yl)glycerol 3-phosphate = 3-(imidazol-4-yl)-2-oxopropyl phosphate + H2O. The protein operates within amino-acid biosynthesis; L-histidine biosynthesis; L-histidine from 5-phospho-alpha-D-ribose 1-diphosphate: step 6/9. The polypeptide is Imidazoleglycerol-phosphate dehydratase (Halalkalibacterium halodurans (strain ATCC BAA-125 / DSM 18197 / FERM 7344 / JCM 9153 / C-125) (Bacillus halodurans)).